Reading from the N-terminus, the 79-residue chain is Large ribosomal subunit protein bL31 (79 aa).

It belongs to the bacterial ribosomal protein bL31 family. Type A subfamily. In terms of assembly, part of the 50S ribosomal subunit.

Functionally, binds the 23S rRNA. The chain is Large ribosomal subunit protein bL31 from Synechococcus sp. (strain CC9902).